Reading from the N-terminus, the 461-residue chain is Argininosuccinate lyase (461 aa).

It belongs to the lyase 1 family. Argininosuccinate lyase subfamily.

It localises to the cytoplasm. It carries out the reaction 2-(N(omega)-L-arginino)succinate = fumarate + L-arginine. The protein operates within amino-acid biosynthesis; L-arginine biosynthesis; L-arginine from L-ornithine and carbamoyl phosphate: step 3/3. This is Argininosuccinate lyase from Aeromonas hydrophila subsp. hydrophila (strain ATCC 7966 / DSM 30187 / BCRC 13018 / CCUG 14551 / JCM 1027 / KCTC 2358 / NCIMB 9240 / NCTC 8049).